The following is an 868-amino-acid chain: Rifampicin phosphotransferase (868 aa).

Residues 5–317 (TERYVLDLQE…FHIVQSRPIT (313 aa)) are ATP-binding. Positions 26, 120, 135, 139, 186, 300, 312, and 314 each coordinate ATP. Residues 330–755 (NHVYVSVGHQ…TSDGEALTGA (426 aa)) are rifampicin-binding. A disordered region spans residues 410–430 (FVPSLPDAPPAGPRAGAAPEP). The segment at 768-866 (GLPVSTGTVE…VHGTDGYIEI (99 aa)) is swivel phosphohistidine. The active-site Tele-phosphohistidine intermediate is H826.

The protein belongs to the rifampicin phosphotransferase family.

The enzyme catalyses rifampicin + ATP + H2O = 21-phosphorifampicin + AMP + phosphate + 2 H(+). In terms of biological role, catalyzes the phosphorylation of rifampicin, also known as rifampin (RIF), leading to its inactivation. Confers high level resistance to a variety of clinically used rifamycin antibiotics. Does not show phosphoenolpyruvate (PEP) synthase activity. The chain is Rifampicin phosphotransferase from Streptomyces sviceus (strain ATCC 29083 / DSM 924 / JCM 4929 / NBRC 13980 / NCIMB 11184 / NRRL 5439 / UC 5370).